A 295-amino-acid polypeptide reads, in one-letter code: GTPase Era (295 aa).

The region spanning 7-176 (KTISVCIIGR…IKSKAKVSPW (170 aa)) is the Era-type G domain. A G1 region spans residues 15-22 (GRPNSGKS). 15–22 (GRPNSGKS) serves as a coordination point for GTP. The tract at residues 41-45 (QTTRS) is G2. Residues 62–65 (DTPG) are G3. GTP contacts are provided by residues 62 to 66 (DTPGI) and 124 to 127 (NKID). The interval 124-127 (NKID) is G4. The interval 152–154 (ISA) is G5. Residues 204–281 (LQQELPYKLT…HLFLFVKVHA (78 aa)) enclose the KH type-2 domain.

The protein belongs to the TRAFAC class TrmE-Era-EngA-EngB-Septin-like GTPase superfamily. Era GTPase family. In terms of assembly, monomer.

Its subcellular location is the cytoplasm. It is found in the cell inner membrane. Its function is as follows. An essential GTPase that binds both GDP and GTP, with rapid nucleotide exchange. Plays a role in 16S rRNA processing and 30S ribosomal subunit biogenesis and possibly also in cell cycle regulation and energy metabolism. This is GTPase Era from Rickettsia typhi (strain ATCC VR-144 / Wilmington).